The primary structure comprises 376 residues: Light-dependent chlorophyll f synthase (376 aa).

The interval 1–22 is disordered; sequence MKLESDHVIATSDSSDYTSEPT. The span at 11–22 shows a compositional bias: polar residues; the sequence is TSDSSDYTSEPT. Helical transmembrane passes span 51-68, 140-155, 164-178, 219-240, and 298-312; these read YVGW…TAAT, HFLI…EWEL, WISL…ASVS, LHQL…HGSL, and FLAA…SAAL. Position 140 (His140) interacts with a chlorophyll. His220 is a binding site for a chlorophyll.

It belongs to the reaction center PufL/M/PsbA/D family. Homodimer.

It is found in the cellular thylakoid membrane. In terms of biological role, synthesizes chlorophyll f or chlorophyllide f (Chl f, 2-formyl chlorophyll a), probably by oxidation of chlorophyll a or chlorophyllide a and reduction of plastoquinone. The reaction is probably light-dependent. Chl f absorbs far red light (FRL, 707 nm in 100% methanol), and is synthesized when cells are grown in FRL, where it provides the advantage of extending the spectral range of harvested light in terrestrial cyanobacteria. When ectopically expressed in Synechococcus PCC 7002 (which does not grow in FRL and does not make Chl f) produces Chl f (0.059% of total chlorophyll). In Chlorogloeopsis fritschii (strain PCC 9212), this protein is Light-dependent chlorophyll f synthase.